The following is a 305-amino-acid chain: L-lactate dehydrogenase (305 aa).

NAD(+)-binding positions include V11, D32, K37, and 76 to 77 (GV). Residues Q79, R85, and 117 to 120 (NPVD) each bind substrate. NAD(+) is bound by residues 115 to 117 (ATN) and S140. 145-148 (DTAR) provides a ligand contact to substrate. Residues R150 and H165 each contribute to the beta-D-fructose 1,6-bisphosphate site. The active-site Proton acceptor is the H172. Y218 carries the phosphotyrosine modification. T227 lines the substrate pocket.

Belongs to the LDH/MDH superfamily. LDH family. In terms of assembly, homotetramer.

Its subcellular location is the cytoplasm. It carries out the reaction (S)-lactate + NAD(+) = pyruvate + NADH + H(+). The protein operates within fermentation; pyruvate fermentation to lactate; (S)-lactate from pyruvate: step 1/1. Its activity is regulated as follows. Allosterically activated by fructose 1,6-bisphosphate (FBP). Catalyzes the conversion of lactate to pyruvate. The sequence is that of L-lactate dehydrogenase from Chloroherpeton thalassium (strain ATCC 35110 / GB-78).